A 278-amino-acid chain; its full sequence is 4-diphosphocytidyl-2-C-methyl-D-erythritol kinase (278 aa).

K9 is a catalytic residue. 89–99 contacts ATP; it reads PVASGIGGGSA. D128 is an active-site residue.

Belongs to the GHMP kinase family. IspE subfamily.

It carries out the reaction 4-CDP-2-C-methyl-D-erythritol + ATP = 4-CDP-2-C-methyl-D-erythritol 2-phosphate + ADP + H(+). The protein operates within isoprenoid biosynthesis; isopentenyl diphosphate biosynthesis via DXP pathway; isopentenyl diphosphate from 1-deoxy-D-xylulose 5-phosphate: step 3/6. In terms of biological role, catalyzes the phosphorylation of the position 2 hydroxy group of 4-diphosphocytidyl-2C-methyl-D-erythritol. The chain is 4-diphosphocytidyl-2-C-methyl-D-erythritol kinase from Cereibacter sphaeroides (strain ATCC 17025 / ATH 2.4.3) (Rhodobacter sphaeroides).